The sequence spans 716 residues: Iron-sulfur clusters transporter atm1, mitochondrial (716 aa).

A mitochondrion-targeting transit peptide spans 1 to 18; sequence MAPSIKLSTMATSLHRAH. Topologically, residues 19-123 are mitochondrial matrix; sequence GTSALLRRPR…PKGSWGDKAR (105 aa). Positions 57–87 are disordered; that stretch reads LFAPNGSAKDESKPAVSTVPKTTGRGPSDPL. The chain crosses the membrane as a helical span at residues 124 to 145; it reads VLLAIGLLVGGKVLNVQVPFYF. An ABC transmembrane type-1 domain is found at 124-414; the sequence is VLLAIGLLVG…LGSVYRELRQ (291 aa). Over 146–168 the chain is Mitochondrial intermembrane; it reads REIVDSLNIDFSTTGGSVTAVAG. The chain crosses the membrane as a helical span at residues 169-192; that stretch reads AMILGYGAARVGAVVSQELRNAVF. At 193–241 the chain is on the mitochondrial matrix side; sequence ASVAQKAIRKVARNTFEHLLNLDLSFHLSKQTGGLTRAIDRGTKGISFL. The helical transmembrane segment at 242-265 threads the bilayer; the sequence is LTSMVFHIVPTALEISMVCGILTY. Residue asparagine 266 is a topological domain, mitochondrial intermembrane. The helical transmembrane segment at 267-287 threads the bilayer; sequence FGWQYAALTALTMVSYTAFTI. Over 288–353 the chain is Mitochondrial matrix; that stretch reads LTTAWRTKFR…NSIKVATSLA (66 aa). Glutathione-binding positions include 293–297 and 356–359; these read RTKFR and NSGQ. A helical membrane pass occupies residues 354-372; it reads FLNSGQNIIFSSALTVMMY. The Mitochondrial intermembrane portion of the chain corresponds to 373–387; the sequence is MGAHGVATGQLTVGD. A helical membrane pass occupies residues 388-409; that stretch reads LVLINQLVFQLSVPLNFLGSVY. Glutathione is bound at residue glycine 406. At 410-716 the chain is on the mitochondrial matrix side; that stretch reads RELRQSLLDM…KEEVGEKKEA (307 aa). One can recognise an ABC transporter domain in the interval 449-690; it reads IEFKDVTFGY…NGVYAQLWRA (242 aa). Residues tyrosine 458 and 482–493 contribute to the ATP site; that span reads GPSGCGKSTLLR. The segment at 697–716 is disordered; that stretch reads EEGEVSKKGEKEEVGEKKEA. Positions 700–716 are enriched in basic and acidic residues; the sequence is EVSKKGEKEEVGEKKEA.

This sequence belongs to the ABC transporter superfamily. ABCB family. Heavy Metal importer (TC 3.A.1.210) subfamily. Homodimer.

The protein localises to the mitochondrion inner membrane. Functionally, performs an essential function in the generation of cytoplasmic iron-sulfur proteins by mediating the ATP-dependent export of Fe/S cluster precursors synthesized by egt-3 and other mitochondrial proteins. Hydrolyzes ATP. Binds glutathione and may function by transporting a glutathione-conjugated iron-sulfur compound. The sequence is that of Iron-sulfur clusters transporter atm1, mitochondrial from Neurospora crassa (strain ATCC 24698 / 74-OR23-1A / CBS 708.71 / DSM 1257 / FGSC 987).